Consider the following 512-residue polypeptide: Cytochrome P450 72A15 (512 aa).

A helical membrane pass occupies residues 2-22; it reads EISVASVTISVVLAVVSWWIW. Cysteine 460 is a heme binding site.

Belongs to the cytochrome P450 family. Heme serves as cofactor.

It is found in the membrane. In Arabidopsis thaliana (Mouse-ear cress), this protein is Cytochrome P450 72A15 (CYP72A15).